A 1010-amino-acid polypeptide reads, in one-letter code: PHD finger protein 20 (1010 aa).

Tudor domains lie at 4-69 and 83-147; these read HPPN…RPLE and GSSE…GNAR. Disordered stretches follow at residues 142 to 373 and 483 to 609; these read IVGN…EGQL and EKSP…GKLK. Basic and acidic residues predominate over residues 147 to 246; that stretch reads RPKETDHKSL…VEKKPEKDLV (100 aa). S159 carries the phosphoserine modification. Residues 257–269 constitute a DNA-binding region (a.T hook); sequence KRKRGRPPSITPT. Over residues 267–280 the composition is skewed to polar residues; that stretch reads TPTAVDSNSQTLQP. Basic and acidic residues-rich tracts occupy residues 292 to 325, 483 to 493, and 525 to 541; these read KRSDTPLKRPRLDKNSPQEQSKKRSENSDKDLSR, EKSPEPEEGPG, and AKEKEKTKEKKFKELVR. Residues 455-485 form a C2H2-type zinc finger; that stretch reads FRCKVLDCLKFFRKAKLLHYHMKYFHGMEKS. Over residues 542–554 the composition is skewed to basic residues; it reads VKPKKKKKKKKKT. A PHD-type zinc finger spans residues 657-703; it reads RCICEVQEENDFMIQCEECQCWQHGVCMGLLEENVPEKYTCYVCQDP. The segment at 804–827 is disordered; that stretch reads RSEESPSYRTLNGAVEKPSPLPRS. Position 841 is an N6-acetyllysine (K841). S876 and S878 each carry phosphoserine. The tract at residues 877 to 902 is disordered; that stretch reads LSPRLGWPIDQDRSRGDIDPKPSSPK. Residues 886 to 902 show a composition bias toward basic and acidic residues; it reads DQDRSRGDIDPKPSSPK.

As to quaternary structure, homodimer; disulfide-linked. Component of some MLL1/MLL complex, at least composed of the core components KMT2A/MLL1, ASH2L, HCFC1, WDR5 and RBBP5, as well as the facultative components BACC1, CHD8, E2F6, HSP70, INO80C, KANSL1, LAS1L, MAX, MCRS1, MGA, MYST1/MOF, PELP1, PHF20, PRP31, RING2, RUVB1/TIP49A, RUVB2/TIP49B, SENP3, TAF1, TAF4, TAF6, TAF7, TAF9 and TEX10. Component of the NSL complex at least composed of MOF/KAT8, KANSL1, KANSL2, KANSL3, MCRS1, PHF20, OGT1/OGT, WDR5 and HCFC1. Post-translationally, ubiquitinated by TRIM26; leading to proteasomal degradation.

The protein localises to the nucleus. In terms of biological role, contributes to methyllysine-dependent p53/TP53 stabilization and up-regulation after DNA damage. Methyllysine-binding protein, component of the MOF histone acetyltransferase protein complex. Not required for maintaining the global histone H4 'Lys-16' acetylation (H4K16ac) levels or locus specific histone acetylation, but instead works downstream in transcriptional regulation of MOF target genes. As part of the NSL complex it may be involved in acetylation of nucleosomal histone H4 on several lysine residues. The polypeptide is PHD finger protein 20 (Phf20) (Mus musculus (Mouse)).